The primary structure comprises 411 residues: Cytochrome P450 monooxygenase sirE (411 aa).

Asparagine 12 and asparagine 149 each carry an N-linked (GlcNAc...) asparagine glycan. Residues 181–203 form a helical membrane-spanning segment; that stretch reads FLNVISIFTVMMASLNVLYDILA. Asparagine 342 carries an N-linked (GlcNAc...) asparagine glycan. Residue cysteine 352 coordinates heme.

The protein belongs to the cytochrome P450 family. Heme serves as cofactor.

Its subcellular location is the membrane. The protein operates within mycotoxin biosynthesis. Its function is as follows. Cytochrome P450 monooxygenase; part of the gene cluster that mediates the biosynthesis of sirodesmin PL, an epipolythiodioxopiperazine (ETP) characterized by a disulfide bridged cyclic dipeptide and that acts as a phytotoxin which is involved in the blackleg didease of canola. SirD catalyzes the O-prenylation of L-tyrosine (L-Tyr) in the presence of dimethylallyl diphosphate (DMAPP) to yield 4-O-dimethylallyl-L-Tyr, and therefore represents probably the first pathway-specific enzyme in the biosynthesis of sirodesmin PL. 4-O-dimethylallyl-L-Tyr, then undergoes condensation with L-Ser in a reaction catalyzed by the non-ribosomal peptide synthase sirP to form the diketopiperazine (DKP) backbone. Further bishydroxylation of the DKP performed by the cytochrome P450 monooxygenase sirC leads to the production of the intermediate phomamide. This step is essential to form the reactive thiol group required for toxicity of sirodesmin PL. The next steps of sirodesmin biosynthesis are not well understood yet, but some predictions could be made from intermediate compounds identification. Phomamide is converted into phomalizarine via oxidation, probably by sirT. Further oxidation, methylation (by sirM or sirN) and reduction steps convert phomalizarine to deacetyl sirodesmin. Finally, acetyltransferase sirH probably acetylates deacetyl sirodesmin to produce sirodesmin PL. This Leptosphaeria maculans (Blackleg fungus) protein is Cytochrome P450 monooxygenase sirE.